Here is a 98-residue protein sequence, read N- to C-terminus: Large ribosomal subunit protein bL21 (98 aa).

Belongs to the bacterial ribosomal protein bL21 family. In terms of assembly, part of the 50S ribosomal subunit. Contacts protein L20.

In terms of biological role, this protein binds to 23S rRNA in the presence of protein L20. This Novosphingobium aromaticivorans (strain ATCC 700278 / DSM 12444 / CCUG 56034 / CIP 105152 / NBRC 16084 / F199) protein is Large ribosomal subunit protein bL21.